The primary structure comprises 662 residues: Leucine aminopeptidase 2 (662 aa).

Residues 178–180 and 304–309 each bind a peptide; these read QLE and PYGGME. H333 is a binding site for Zn(2+). Catalysis depends on E334, which acts as the Proton acceptor. Residues H337 and E356 each coordinate Zn(2+). Y422 (proton donor) is an active-site residue.

It belongs to the peptidase M1 family. Requires Zn(2+) as cofactor.

The protein localises to the cytoplasm. It localises to the nucleus. The catalysed reaction is an epoxide + H2O = an ethanediol. In terms of biological role, aminopeptidase that preferentially cleaves di- and tripeptides. Also has low epoxide hydrolase activity (in vitro). Can hydrolyze the epoxide leukotriene LTA(4) but it forms preferentially 5,6-dihydroxy-7,9,11,14-eicosatetraenoic acid rather than the cytokine leukotriene B(4) as the product compared to the homologous mammalian enzyme (in vitro). The sequence is that of Leucine aminopeptidase 2 from Kluyveromyces lactis (strain ATCC 8585 / CBS 2359 / DSM 70799 / NBRC 1267 / NRRL Y-1140 / WM37) (Yeast).